The primary structure comprises 148 residues: Snaclec 6 (148 aa).

A signal peptide spans 1–23; sequence MGRFIFVSFGLLVMFLSLSGTEA. 3 disulfide bridges follow: Cys-27–Cys-38, Cys-55–Cys-144, and Cys-121–Cys-136. One can recognise a C-type lectin domain in the interval 34–145; it reads YDQNCYKAFE…CSGTHNFVCK (112 aa). Asn-130 carries an N-linked (GlcNAc...) asparagine glycan.

It belongs to the snaclec family. Heterodimer; disulfide-linked. Expressed by the venom gland.

It is found in the secreted. In terms of biological role, interferes with one step of hemostasis (modulation of platelet aggregation, or coagulation cascade, for example). The protein is Snaclec 6 of Bitis arietans (African puff adder).